We begin with the raw amino-acid sequence, 477 residues long: Aspartyl/glutamyl-tRNA(Asn/Gln) amidotransferase subunit B (477 aa).

Belongs to the GatB/GatE family. GatB subfamily. In terms of assembly, heterotrimer of A, B and C subunits.

It carries out the reaction L-glutamyl-tRNA(Gln) + L-glutamine + ATP + H2O = L-glutaminyl-tRNA(Gln) + L-glutamate + ADP + phosphate + H(+). The catalysed reaction is L-aspartyl-tRNA(Asn) + L-glutamine + ATP + H2O = L-asparaginyl-tRNA(Asn) + L-glutamate + ADP + phosphate + 2 H(+). Functionally, allows the formation of correctly charged Asn-tRNA(Asn) or Gln-tRNA(Gln) through the transamidation of misacylated Asp-tRNA(Asn) or Glu-tRNA(Gln) in organisms which lack either or both of asparaginyl-tRNA or glutaminyl-tRNA synthetases. The reaction takes place in the presence of glutamine and ATP through an activated phospho-Asp-tRNA(Asn) or phospho-Glu-tRNA(Gln). The polypeptide is Aspartyl/glutamyl-tRNA(Asn/Gln) amidotransferase subunit B (Legionella pneumophila subsp. pneumophila (strain Philadelphia 1 / ATCC 33152 / DSM 7513)).